The following is a 111-amino-acid chain: MNEILKTEDEVVRWSVKKINDDTTLIEFELKRDLVPEDLKKINPPDAVKNKFANTFIVLSGRGPIWLYGFLIHFYHPTKGIGVFDPRLGGAVVVSSHSPNKKVGDVIKWEG.

It to A.fulgidus AF1864.

This is an uncharacterized protein from Aquifex aeolicus (strain VF5).